The sequence spans 86 residues: Small ribosomal subunit protein bS20 (86 aa).

It belongs to the bacterial ribosomal protein bS20 family.

In terms of biological role, binds directly to 16S ribosomal RNA. The sequence is that of Small ribosomal subunit protein bS20 from Rhodococcus jostii (strain RHA1).